Consider the following 156-residue polypeptide: ATP synthase subunit b (156 aa).

Residues 11 to 31 (AIAFVIFVWFCMKYVWPPLMA) form a helical membrane-spanning segment.

Belongs to the ATPase B chain family. In terms of assembly, F-type ATPases have 2 components, F(1) - the catalytic core - and F(0) - the membrane proton channel. F(1) has five subunits: alpha(3), beta(3), gamma(1), delta(1), epsilon(1). F(0) has three main subunits: a(1), b(2) and c(10-14). The alpha and beta chains form an alternating ring which encloses part of the gamma chain. F(1) is attached to F(0) by a central stalk formed by the gamma and epsilon chains, while a peripheral stalk is formed by the delta and b chains.

The protein resides in the cell inner membrane. Functionally, f(1)F(0) ATP synthase produces ATP from ADP in the presence of a proton or sodium gradient. F-type ATPases consist of two structural domains, F(1) containing the extramembraneous catalytic core and F(0) containing the membrane proton channel, linked together by a central stalk and a peripheral stalk. During catalysis, ATP synthesis in the catalytic domain of F(1) is coupled via a rotary mechanism of the central stalk subunits to proton translocation. In terms of biological role, component of the F(0) channel, it forms part of the peripheral stalk, linking F(1) to F(0). The sequence is that of ATP synthase subunit b from Klebsiella pneumoniae (strain 342).